Here is a 487-residue protein sequence, read N- to C-terminus: Fibroblast growth factor receptor-like 1 (487 aa).

Residues 1–18 (MGLQLALLLAGIVALSDS) form the signal peptide. Over 19–371 (ARGPPRIADK…PSSVSSLPWP (353 aa)) the chain is Extracellular. One can recognise an Ig-like C2-type 1 domain in the interval 23–109 (PRIADKVIHR…GSTNVNYTLI (87 aa)). Cysteines 45 and 93 form a disulfide. Residue N105 is glycosylated (N-linked (GlcNAc...) asparagine). Residues 115–125 (SSGKNSQTPEG) show a composition bias toward polar residues. The interval 115–147 (SSGKNSQTPEGSNGEYEDHSGKQWAQPRFTQPA) is disordered. Ig-like C2-type domains lie at 141 to 231 (PRFT…YKVE) and 240 to 348 (PILT…AFLT). The cysteines at positions 166 and 215 are disulfide-linked. N225, N249, and N287 each carry an N-linked (GlcNAc...) asparagine glycan. C262 and C332 form a disulfide bridge. Residues 372 to 392 (VIIGIPAGAVFIFGTILLWLC) form a helical membrane-spanning segment. The Cytoplasmic segment spans residues 393–487 (QTKKKPCSPP…HQHQHIQYQC (95 aa)).

Interacts with heparin and FGF2. Expressed in cartilaginous structures.

It localises to the cell membrane. Functionally, has a negative effect on cell proliferation. This chain is Fibroblast growth factor receptor-like 1 (FGFRL1), found in Gallus gallus (Chicken).